The sequence spans 404 residues: Ribosomal RNA large subunit methyltransferase F (404 aa).

Composition is skewed to basic residues over residues 1–10 (MTKHSQKQNR) and 18–29 (QTRRKKPAGKLK). Disordered stretches follow at residues 1–54 (MTKH…HERN), 156–177 (GTRQNVPYASKPESSAPKQRYK), and 289–308 (RAAKGHKPEPAASKAKPDAN). Residues 30 to 54 (AKSEAKLDTRGKPETTEKKGLHERN) show a composition bias toward basic and acidic residues. Over residues 157–172 (TRQNVPYASKPESSAP) the composition is skewed to polar residues.

It belongs to the methyltransferase superfamily. METTL16/RlmF family.

The protein localises to the cytoplasm. It carries out the reaction adenosine(1618) in 23S rRNA + S-adenosyl-L-methionine = N(6)-methyladenosine(1618) in 23S rRNA + S-adenosyl-L-homocysteine + H(+). Its function is as follows. Specifically methylates the adenine in position 1618 of 23S rRNA. The protein is Ribosomal RNA large subunit methyltransferase F of Shewanella sediminis (strain HAW-EB3).